The following is a 150-amino-acid chain: 1,4-dihydroxy-2-naphthoyl-CoA hydrolase (150 aa).

Aspartate 19 is a catalytic residue.

This sequence belongs to the 4-hydroxybenzoyl-CoA thioesterase family. DHNA-CoA hydrolase subfamily.

The catalysed reaction is 1,4-dihydroxy-2-naphthoyl-CoA + H2O = 1,4-dihydroxy-2-naphthoate + CoA + H(+). It participates in cofactor biosynthesis; phylloquinone biosynthesis. Its pathway is quinol/quinone metabolism; 1,4-dihydroxy-2-naphthoate biosynthesis; 1,4-dihydroxy-2-naphthoate from chorismate: step 7/7. Catalyzes the hydrolysis of 1,4-dihydroxy-2-naphthoyl-CoA (DHNA-CoA) to 1,4-dihydroxy-2-naphthoate (DHNA), a reaction involved in phylloquinone (vitamin K1) biosynthesis. The polypeptide is 1,4-dihydroxy-2-naphthoyl-CoA hydrolase (Prochlorococcus marinus (strain AS9601)).